The chain runs to 68 residues: Protein P33 (68 aa).

The stretch at 34-63 (IVNLQGRIAELEARETEMLARVDTLIARLA) forms a coiled coil.

Functionally, assembly protein. In Acinetobacter calcoaceticus (Arthrobacter siderocapsulatus), this protein is Protein P33 (XXXIII).